A 1095-amino-acid polypeptide reads, in one-letter code: DNA-directed RNA polymerase subunit beta (1095 aa).

A disordered region spans residues 1069–1095 (DLMQDVNPRRSTPSRPTYESLGKEYEE).

The protein belongs to the RNA polymerase beta chain family. In cyanobacteria the RNAP catalytic core is composed of 2 alpha, 1 beta, 1 beta', 1 gamma and 1 omega subunit. When a sigma factor is associated with the core the holoenzyme is formed, which can initiate transcription.

It carries out the reaction RNA(n) + a ribonucleoside 5'-triphosphate = RNA(n+1) + diphosphate. Functionally, DNA-dependent RNA polymerase catalyzes the transcription of DNA into RNA using the four ribonucleoside triphosphates as substrates. This Prochlorococcus marinus (strain NATL1A) protein is DNA-directed RNA polymerase subunit beta.